The following is a 377-amino-acid chain: UDP-N-acetylglucosamine 2-epimerase (377 aa).

Residue H212 is part of the active site.

Belongs to the UDP-N-acetylglucosamine 2-epimerase family. Homodimer.

It carries out the reaction UDP-N-acetyl-alpha-D-glucosamine + H2O = aldehydo-N-acetyl-D-mannosamine + UDP + H(+). Functionally, catalyzes the conversion of UDP-N-acetylglucosamine (UDP-GlcNAc) to UDP and N-acetyl-D-mannosamine (ManNAc). The chain is UDP-N-acetylglucosamine 2-epimerase (siaA) from Neisseria meningitidis serogroup B (strain ATCC BAA-335 / MC58).